Consider the following 544-residue polypeptide: GDP-mannose 4,6-dehydratase sdnI (544 aa).

NADP(+) is bound by residues 16–21 (GITGQD), Arg41, 64–65 (DM), and 86–90 (LAAQS). Ser90 contributes to the substrate binding site. Catalysis depends on nucleophile residues Glu135 and Tyr157. Tyr157 is a substrate binding site. Lys161 is a binding site for NADP(+). Asn186 serves as a coordination point for substrate. Positions 187 and 192 each coordinate NADP(+). Residues 192 to 200 (RGTTFVTRK), Gly219, Arg225, and 303 to 306 (RPVE) each bind substrate. The disordered stretch occupies residues 366–406 (GETTSAVNSSPSSTAGDTYKASDGWSTSGAEGSEQTECSSV). Composition is skewed to polar residues over residues 368–381 (TTSA…STAG) and 389–404 (GWST…TECS).

Belongs to the NAD(P)-dependent epimerase/dehydratase family. GDP-mannose 4,6-dehydratase subfamily. The cofactor is NADP(+).

The catalysed reaction is GDP-alpha-D-mannose = GDP-4-dehydro-alpha-D-rhamnose + H2O. The protein operates within antibiotic biosynthesis. GDP-mannose 4,6-dehydratase; part of the gene cluster that mediates the biosynthesis of sordarin and hypoxysordarin, glycoside antibiotics with a unique tetracyclic diterpene aglycone structure. First, the geranylgeranyl diphosphate synthase sdnC constructs GGDP from farnesyl diphosphate and isopentenyl diphosphate. The diterpene cyclase sdnA then catalyzes the cyclization of GGDP to afford cycloaraneosene. Cycloaraneosene is then hydroxylated four times by the putative cytochrome P450 monooxygenases sdnB, sdnE, sdnF and sdnH to give a hydroxylated cycloaraneosene derivative such as cycloaraneosene-8,9,13,19-tetraol. Although the order of the hydroxylations is unclear, at least C8, C9 and C13 of the cycloaraneosene skeleton are hydroxylated before the sordaricin formation. Dehydration of the 13-hydroxy group of the hydroxylated cycloaraneosene derivative might be catalyzed by an unassigned hypothetical protein such as sdnG and sdnP to construct the cyclopentadiene moiety. The FAD-dependent oxidoreductase sdnN is proposed to catalyze the oxidation at C9 of the hydroxylated cycloaraneosene derivative and also catalyze the Baeyer-Villiger oxidation to give the lactone intermediate. The presumed lactone intermediate would be hydrolyzed to give an acrolein moiety and a carboxylate moiety. Then, [4+2]cycloaddition would occur between the acrolein moiety and the cyclopentadiene moiety to give sordaricin. SdnN might also be involved in the [4+2]cycloaddition after the hypothesized oxidation to accommodate the oxidized product and prompt the [4+2]cycloaddition. GDP-6-deoxy-D-altrose may be biosynthesized from GDP-D-mannose by the putative GDP-mannose-4,6-dehydratase sdnI and the short-chain dehydrogenase sdnK. The glycosyltransferase sdnJ catalyzes the attachment of 6-deoxy-D-altrose onto the 19-hydroxy group of sordaricin to give 4'-O-demethylsordarin. The methyltransferase sdnD would complete the biosynthesis of sordarin. Sordarin can be further modified into hypoxysordarin. The unique acyl chain at the 3'-hydroxy group of hypoxysordarin would be constructed by an iterative type I PKS sdnO and the trans-acting polyketide methyltransferase sdnL. SdnL would be responsible for the introduction of an alpha-methyl group of the polyketide chain. Alternatively, the beta-lactamase-like protein sdnR might be responsible for the cleavage and transfer of the polyketide chain from the PKS sdnO to sordarin. Two putative cytochrome P450 monooxygenases, sdnQ and sdnT, might catalyze the epoxidations of the polyketide chain to complete the biosynthesis of hypoxysordarin. Transcriptional regulators sdnM and sdnS are presumably encoded for the transcriptional regulation of the expression of the sdn gene cluster. The polypeptide is GDP-mannose 4,6-dehydratase sdnI (Sordaria araneosa (Pleurage araneosa)).